Consider the following 275-residue polypeptide: Ovocalyxin-32 (275 aa).

Positions 1 to 23 (MPGLRAALPAALLLLSSFPPAAA) are cleaved as a signal peptide. 2 Cystatin LXN-type domains span residues 32–131 (PGVM…NKKQ) and 151–255 (TANY…GLED). A disordered region spans residues 254–275 (EDGSGQDSGSAAGTSHETKGNF). Low complexity predominate over residues 256–268 (GSGQDSGSAAGTS).

It belongs to the protease inhibitor I47 (latexin) family. In terms of tissue distribution, expressed at high levels in the uterine and isthmus regions of the oviduct, and concentrated in the eggshell.

The protein localises to the secreted. In terms of biological role, component of the matrix of the eggshell. In Gallus gallus (Chicken), this protein is Ovocalyxin-32.